The following is a 117-amino-acid chain: Aspartate 1-decarboxylase (117 aa).

Residue Ser-25 is the Schiff-base intermediate with substrate; via pyruvic acid of the active site. Position 25 is a pyruvic acid (Ser) (Ser-25). Residue Thr-57 participates in substrate binding. Tyr-58 functions as the Proton donor in the catalytic mechanism. 73 to 75 (GAA) is a binding site for substrate.

This sequence belongs to the PanD family. Heterooctamer of four alpha and four beta subunits. It depends on pyruvate as a cofactor. Post-translationally, is synthesized initially as an inactive proenzyme, which is activated by self-cleavage at a specific serine bond to produce a beta-subunit with a hydroxyl group at its C-terminus and an alpha-subunit with a pyruvoyl group at its N-terminus.

The protein localises to the cytoplasm. It carries out the reaction L-aspartate + H(+) = beta-alanine + CO2. The protein operates within cofactor biosynthesis; (R)-pantothenate biosynthesis; beta-alanine from L-aspartate: step 1/1. Its function is as follows. Catalyzes the pyruvoyl-dependent decarboxylation of aspartate to produce beta-alanine. In Bacteroides fragilis (strain ATCC 25285 / DSM 2151 / CCUG 4856 / JCM 11019 / LMG 10263 / NCTC 9343 / Onslow / VPI 2553 / EN-2), this protein is Aspartate 1-decarboxylase.